Reading from the N-terminus, the 420-residue chain is UDP-N-acetylglucosamine 1-carboxyvinyltransferase 2 (420 aa).

Residue 22 to 23 (KN) coordinates phosphoenolpyruvate. Residue Arg92 participates in UDP-N-acetyl-alpha-D-glucosamine binding. The active-site Proton donor is Cys116. Position 116 is a 2-(S-cysteinyl)pyruvic acid O-phosphothioketal (Cys116). UDP-N-acetyl-alpha-D-glucosamine contacts are provided by residues 121-125 (RPIDL), Asp307, and Ile329.

It belongs to the EPSP synthase family. MurA subfamily.

It localises to the cytoplasm. The catalysed reaction is phosphoenolpyruvate + UDP-N-acetyl-alpha-D-glucosamine = UDP-N-acetyl-3-O-(1-carboxyvinyl)-alpha-D-glucosamine + phosphate. Its pathway is cell wall biogenesis; peptidoglycan biosynthesis. In terms of biological role, cell wall formation. Adds enolpyruvyl to UDP-N-acetylglucosamine. The sequence is that of UDP-N-acetylglucosamine 1-carboxyvinyltransferase 2 from Streptococcus thermophilus (strain ATCC BAA-250 / LMG 18311).